A 295-amino-acid chain; its full sequence is Nucleotide-binding protein BPUM_3115 (295 aa).

Residue 16–23 (GMSGAGKT) coordinates ATP. 67–70 (DLRG) contacts GTP.

The protein belongs to the RapZ-like family.

Displays ATPase and GTPase activities. The chain is Nucleotide-binding protein BPUM_3115 from Bacillus pumilus (strain SAFR-032).